We begin with the raw amino-acid sequence, 426 residues long: Phosphoribosylamine--glycine ligase (426 aa).

One can recognise an ATP-grasp domain in the interval K107 to N313. L133 to S194 contacts ATP. 2 residues coordinate Mg(2+): E283 and N285.

Belongs to the GARS family. It depends on Mg(2+) as a cofactor. Mn(2+) serves as cofactor.

The enzyme catalyses 5-phospho-beta-D-ribosylamine + glycine + ATP = N(1)-(5-phospho-beta-D-ribosyl)glycinamide + ADP + phosphate + H(+). The protein operates within purine metabolism; IMP biosynthesis via de novo pathway; N(1)-(5-phospho-D-ribosyl)glycinamide from 5-phospho-alpha-D-ribose 1-diphosphate: step 2/2. In Fusobacterium nucleatum subsp. nucleatum (strain ATCC 25586 / DSM 15643 / BCRC 10681 / CIP 101130 / JCM 8532 / KCTC 2640 / LMG 13131 / VPI 4355), this protein is Phosphoribosylamine--glycine ligase.